Here is a 1043-residue protein sequence, read N- to C-terminus: Unconventional myosin-Ia (1043 aa).

The Myosin motor domain maps to 8–694 (VGVEDLVLLE…TLFYLEEQRR (687 aa)). 101–108 (GESGSGKT) is an ATP binding site. An actin-binding region spans residues 571–593 (VAILMKNLYSKSPNYIRCIKPNE). IQ domains follow at residues 697-719 (LQQL…HYQL), 720-742 (MRKS…CYGK), and 743-772 (IKAS…SEAA). Residues 858–1042 (KASYPQSVPI…KGSHCLEVTV (185 aa)) form the TH1 domain.

The protein belongs to the TRAFAC class myosin-kinesin ATPase superfamily. Myosin family. Post-translationally, phosphorylated by ALPK1.

Functionally, involved in directing the movement of organelles along actin filaments. In Homo sapiens (Human), this protein is Unconventional myosin-Ia (MYO1A).